Here is an 89-residue protein sequence, read N- to C-terminus: Small ribosomal subunit protein uS15 (89 aa).

Residues 1-20 (MSITAERKAELIKTHARGEA) are compositionally biased toward basic and acidic residues. The tract at residues 1-24 (MSITAERKAELIKTHARGEADTGS) is disordered.

It belongs to the universal ribosomal protein uS15 family. Part of the 30S ribosomal subunit. Forms a bridge to the 50S subunit in the 70S ribosome, contacting the 23S rRNA.

One of the primary rRNA binding proteins, it binds directly to 16S rRNA where it helps nucleate assembly of the platform of the 30S subunit by binding and bridging several RNA helices of the 16S rRNA. Functionally, forms an intersubunit bridge (bridge B4) with the 23S rRNA of the 50S subunit in the ribosome. The sequence is that of Small ribosomal subunit protein uS15 from Phenylobacterium zucineum (strain HLK1).